Reading from the N-terminus, the 94-residue chain is Cell division protein FtsB (94 aa).

Residues 1–8 (MRLRSPYW) are Cytoplasmic-facing. A helical transmembrane segment spans residues 9–26 (LFVVLILALAGLQYRLWV). At 27 to 94 (GDGSLAQVRD…DGETLYQLAK (68 aa)) the chain is on the periplasmic side. Residues 31 to 78 (LAQVRDLQKQIADQHGENERLLERNRILEAEVAELKKGTETVEERARH) adopt a coiled-coil conformation.

Belongs to the FtsB family. In terms of assembly, part of a complex composed of FtsB, FtsL and FtsQ.

The protein localises to the cell inner membrane. Functionally, essential cell division protein. May link together the upstream cell division proteins, which are predominantly cytoplasmic, with the downstream cell division proteins, which are predominantly periplasmic. The polypeptide is Cell division protein FtsB (Pseudomonas aeruginosa (strain ATCC 15692 / DSM 22644 / CIP 104116 / JCM 14847 / LMG 12228 / 1C / PRS 101 / PAO1)).